The primary structure comprises 343 residues: 3-dehydroquinate synthase (343 aa).

NAD(+) contacts are provided by residues 61-66 (SGEKYK), 95-99 (GVISD), 119-120 (TT), K132, K141, and 159-162 (FLKT). 3 residues coordinate Zn(2+): E174, H231, and H248.

Belongs to the sugar phosphate cyclases superfamily. Dehydroquinate synthase family. NAD(+) is required as a cofactor. Requires Co(2+) as cofactor. It depends on Zn(2+) as a cofactor.

Its subcellular location is the cytoplasm. It catalyses the reaction 7-phospho-2-dehydro-3-deoxy-D-arabino-heptonate = 3-dehydroquinate + phosphate. The protein operates within metabolic intermediate biosynthesis; chorismate biosynthesis; chorismate from D-erythrose 4-phosphate and phosphoenolpyruvate: step 2/7. Functionally, catalyzes the conversion of 3-deoxy-D-arabino-heptulosonate 7-phosphate (DAHP) to dehydroquinate (DHQ). The polypeptide is 3-dehydroquinate synthase (Helicobacter pylori (strain J99 / ATCC 700824) (Campylobacter pylori J99)).